The following is a 469-amino-acid chain: 3-isopropylmalate dehydratase large subunit (469 aa).

Cys350, Cys410, and Cys413 together coordinate [4Fe-4S] cluster.

The protein belongs to the aconitase/IPM isomerase family. LeuC type 1 subfamily. As to quaternary structure, heterodimer of LeuC and LeuD. [4Fe-4S] cluster serves as cofactor.

The enzyme catalyses (2R,3S)-3-isopropylmalate = (2S)-2-isopropylmalate. It functions in the pathway amino-acid biosynthesis; L-leucine biosynthesis; L-leucine from 3-methyl-2-oxobutanoate: step 2/4. In terms of biological role, catalyzes the isomerization between 2-isopropylmalate and 3-isopropylmalate, via the formation of 2-isopropylmaleate. This is 3-isopropylmalate dehydratase large subunit from Rhodopseudomonas palustris (strain ATCC BAA-98 / CGA009).